The primary structure comprises 340 residues: Uroporphyrinogen decarboxylase (340 aa).

Substrate-binding positions include 23–27 (RQAGR), Asp-72, Tyr-147, Thr-202, and His-316.

It belongs to the uroporphyrinogen decarboxylase family. As to quaternary structure, homodimer.

The protein localises to the cytoplasm. It carries out the reaction uroporphyrinogen III + 4 H(+) = coproporphyrinogen III + 4 CO2. It participates in porphyrin-containing compound metabolism; protoporphyrin-IX biosynthesis; coproporphyrinogen-III from 5-aminolevulinate: step 4/4. Functionally, catalyzes the decarboxylation of four acetate groups of uroporphyrinogen-III to yield coproporphyrinogen-III. This chain is Uroporphyrinogen decarboxylase, found in Geobacter metallireducens (strain ATCC 53774 / DSM 7210 / GS-15).